The primary structure comprises 147 residues: Large ribosomal subunit protein uL15 (147 aa).

Positions 1 to 62 are disordered; sequence MKLHELKPAQ…GQQPLSRRMP (62 aa). Composition is skewed to gly residues over residues 21–31 and 42–52; these read RGIGSGTGKTS and AGGGVRPGFEG.

The protein belongs to the universal ribosomal protein uL15 family. Part of the 50S ribosomal subunit.

In terms of biological role, binds to the 23S rRNA. The chain is Large ribosomal subunit protein uL15 from Desulfitobacterium hafniense (strain DSM 10664 / DCB-2).